The following is a 272-amino-acid chain: MHAASREAFERLIKTLDQGLKESDNAVGNGATTGTELFDVVDVLDQERSLRVAMVDAAATPEQRVELVKTLLSGKVTASTEEIVSAAVSQNWSNSQDFRTGLERLGRRALLRSAEAQGQLERVEEELFSLARILERESELELLLSDRAAAVDDRRDLLAKVLYGKVSSVTEALALQAVGRARKAPVDLLDDLCQEAASLNGYEVARVTSAGPLSEEQKASLSEKLHKIYGRKIAVHTEVDSSLLGGAVVRVGDEVIDGSTAGKLERMRRSLA.

This sequence belongs to the ATPase delta chain family. In terms of assembly, F-type ATPases have 2 components, F(1) - the catalytic core - and F(0) - the membrane proton channel. F(1) has five subunits: alpha(3), beta(3), gamma(1), delta(1), epsilon(1). F(0) has three main subunits: a(1), b(2) and c(10-14). The alpha and beta chains form an alternating ring which encloses part of the gamma chain. F(1) is attached to F(0) by a central stalk formed by the gamma and epsilon chains, while a peripheral stalk is formed by the delta and b chains.

Its subcellular location is the cell membrane. F(1)F(0) ATP synthase produces ATP from ADP in the presence of a proton or sodium gradient. F-type ATPases consist of two structural domains, F(1) containing the extramembraneous catalytic core and F(0) containing the membrane proton channel, linked together by a central stalk and a peripheral stalk. During catalysis, ATP synthesis in the catalytic domain of F(1) is coupled via a rotary mechanism of the central stalk subunits to proton translocation. Functionally, this protein is part of the stalk that links CF(0) to CF(1). It either transmits conformational changes from CF(0) to CF(1) or is implicated in proton conduction. This chain is ATP synthase subunit delta, found in Corynebacterium urealyticum (strain ATCC 43042 / DSM 7109).